Here is a 214-residue protein sequence, read N- to C-terminus: Methylthioribulose-1-phosphate dehydratase (214 aa).

Zn(2+)-binding residues include histidine 103 and histidine 105.

It belongs to the aldolase class II family. MtnB subfamily. The cofactor is Zn(2+).

The enzyme catalyses 5-(methylsulfanyl)-D-ribulose 1-phosphate = 5-methylsulfanyl-2,3-dioxopentyl phosphate + H2O. Its pathway is amino-acid biosynthesis; L-methionine biosynthesis via salvage pathway; L-methionine from S-methyl-5-thio-alpha-D-ribose 1-phosphate: step 2/6. Catalyzes the dehydration of methylthioribulose-1-phosphate (MTRu-1-P) into 2,3-diketo-5-methylthiopentyl-1-phosphate (DK-MTP-1-P). This is Methylthioribulose-1-phosphate dehydratase from Granulibacter bethesdensis (strain ATCC BAA-1260 / CGDNIH1).